The following is a 789-amino-acid chain: Ribosomal protein S6 kinase alpha-5 (789 aa).

In terms of domain architecture, Protein kinase 1 spans 39–308; it reads FELLKVLGTG…ADEIKQHPFF (270 aa). ATP-binding positions include 45–53 and Lys-71; that span reads LGTGAYGKV. The active-site Proton acceptor is Asp-167. Ser-202 carries the phosphoserine; by autocatalysis modification. Positions 309-377 constitute an AGC-kinase C-terminal domain; sequence QNINWDDLAA…VAPSILFKRN (69 aa). The residue at position 350 (Ser-350) is a Phosphoserine. A phosphoserine; by autocatalysis mark is found at Ser-366 and Ser-371. In terms of domain architecture, Protein kinase 2 spans 416–677; it reads DLKEKPLGEG…MSSLRYNEWL (262 aa). ATP contacts are provided by residues 422-430 and Lys-445; that span reads LGEGSFSIC. The active-site Proton acceptor is the Asp-534. 2 positions are modified to phosphothreonine: Thr-571 and Thr-690. The disordered stretch occupies residues 731–789; it reads AKRRKMKKTSTSTETRSSSSESSHSSSSHSHGKTTPTKTLQPTNPTDSNNPETIFQFSD. The span at 739 to 769 shows a compositional bias: low complexity; the sequence is TSTSTETRSSSSESSHSSSSHSHGKTTPTKT. Phosphoserine; by autocatalysis occurs at positions 740, 742, and 748. Polar residues predominate over residues 770–789; that stretch reads LQPTNPTDSNNPETIFQFSD.

This sequence belongs to the protein kinase superfamily. AGC Ser/Thr protein kinase family. S6 kinase subfamily. Requires Mg(2+) as cofactor. Ser-366 and Thr-571 phosphorylation is required for kinase activity. Ser-366 and Ser-202 are autophosphorylated by the C-terminal kinase domain, and their phosphorylation is essential for the catalytic activity of the N-terminal kinase domain. Phosphorylated at Ser-350, Thr-571 and Thr-690 by MAP kinases. Autophosphorylated at Ser-740, Ser-742 and Ser-748 by the N-terminal kinase domain. Widely expressed with high levels in heart, brain and placenta. Less abundant in lung, kidney and liver.

Its subcellular location is the nucleus. It catalyses the reaction L-seryl-[protein] + ATP = O-phospho-L-seryl-[protein] + ADP + H(+). The enzyme catalyses L-threonyl-[protein] + ATP = O-phospho-L-threonyl-[protein] + ADP + H(+). With respect to regulation, activated by phosphorylation at Ser-350, Thr-571 and Thr-690 by MAP kinases, and by further autophosphorylation of Ser-202, Ser-366 and Ser-371 by the activated C-terminal kinase domain. The active N-terminal kinase domain finally phosphorylates downstream substrates, as well as Ser-740, Ser-742 and Ser-748 in its own C-terminal region. Its function is as follows. Serine/threonine-protein kinase that is required for the mitogen or stress-induced phosphorylation of the transcription factors CREB1 and ATF1 and that contributes to gene activation by histone phosphorylation. Phosphorylates CREB1 and ATF1 in response to mitogenic or stress stimuli such as UV-C irradiation, epidermal growth factor (EGF) and anisomycin. Directly represses transcription via phosphorylation of 'Ser-1' of histone H2A. Phosphorylates 'Ser-10' of histone H3 in response to mitogenics, stress stimuli and EGF, which results in the transcriptional activation of several immediate early genes, including proto-oncogenes c-fos/FOS and c-jun/JUN. May also phosphorylate 'Ser-28' of histone H3. Mediates the mitogen- and stress-induced phosphorylation of high mobility group protein 1 (HMGN1/HMG14). This Gallus gallus (Chicken) protein is Ribosomal protein S6 kinase alpha-5 (RPS6KA5).